The chain runs to 219 residues: 2-hydroxy-3-keto-5-methylthiopentenyl-1-phosphate phosphatase (219 aa).

It belongs to the HAD-like hydrolase superfamily. MtnX family.

It carries out the reaction 2-hydroxy-5-methylsulfanyl-3-oxopent-1-enyl phosphate + H2O = 1,2-dihydroxy-5-(methylsulfanyl)pent-1-en-3-one + phosphate. Its pathway is amino-acid biosynthesis; L-methionine biosynthesis via salvage pathway; L-methionine from S-methyl-5-thio-alpha-D-ribose 1-phosphate: step 4/6. Functionally, dephosphorylates 2-hydroxy-3-keto-5-methylthiopentenyl-1-phosphate (HK-MTPenyl-1-P) yielding 1,2-dihydroxy-3-keto-5-methylthiopentene (DHK-MTPene). The sequence is that of 2-hydroxy-3-keto-5-methylthiopentenyl-1-phosphate phosphatase from Bacillus cereus (strain AH187).